The primary structure comprises 449 residues: Probable cysteine proteinase 224L (449 aa).

Catalysis depends on residues Cys99, His292, and Asn322. The helical transmembrane segment at 429–449 (DTQIVFIFFLSVVILFIFIIL) threads the bilayer.

Belongs to the peptidase C1 family.

The protein resides in the membrane. Functionally, probable cysteine protease. This chain is Probable cysteine proteinase 224L, found in Acheta domesticus (House cricket).